The primary structure comprises 639 residues: Threonine--tRNA ligase (639 aa).

The 61-residue stretch at 1-61 (MIHITLPDGS…TADCRLSIIT (61 aa)) folds into the TGS domain. The tract at residues 242–533 (DHRKLGRELD…LLEQHAGALP (292 aa)) is catalytic. 3 residues coordinate Zn(2+): C333, H384, and H510.

It belongs to the class-II aminoacyl-tRNA synthetase family. Homodimer. Zn(2+) is required as a cofactor.

The protein resides in the cytoplasm. It carries out the reaction tRNA(Thr) + L-threonine + ATP = L-threonyl-tRNA(Thr) + AMP + diphosphate + H(+). Catalyzes the attachment of threonine to tRNA(Thr) in a two-step reaction: L-threonine is first activated by ATP to form Thr-AMP and then transferred to the acceptor end of tRNA(Thr). Also edits incorrectly charged L-seryl-tRNA(Thr). This is Threonine--tRNA ligase from Verminephrobacter eiseniae (strain EF01-2).